The primary structure comprises 644 residues: MSYFLSYCKAHGGALLTGYQALRAEGFLCDVTLETEGSEFPAHRSLLACSSDYFRALFKSHTQESRARVIHLHVPSAAGLQRLLDFIYTAWLSLSMDTVEDTLEAASYLQVTEALGLCGRYLERQLAPENCCFAANVAARFGLAHTLDAAERCIVSHLQELLARGAGPAGLLELNPTSLRAVLGAPDVARVPEARLLGLALAWLRQEPTTERLAHCTELLERVRFGLVPADVLRRVYSGSGLVLPARVKGLIIQALNYHTTPSRQPLMQGEQTSIRSPQTRILLVGGRRAREVVIEEVAAPQRAARGQVAAPEPEEEEEELEEEEEEEEWELTQNVVAFDVYNHRWRSLTQLPTPLLGHSVCTAGNFLFVLGGESPSGSASSPLADDSRVVTAQVHRYDPRFHAWTEVPAMREARAHFWCGAVGERLLAVGGLGAGGEVLASVEMYDLRRDRWTAAGALPRALHGHAGAVGDRGVVYISGGKAGRGEGGASSLRDLYVLGPEEQVWSKKAPMGTARFGHHMAVLRGAVFAFLGRYEPFSEIERYDPGADQWTRLRPLPYDRFCYGLAVVEETALLLGGLKWRDSRQVPTRNVVGYDLDLDRWEDIGCALPWAWSGLRCAVLQLAEGGDDEREGEVGEALDLVLG.

The BTB domain occupies 29–96 (CDVTLETEGS…IYTAWLSLSM (68 aa)). The BACK domain occupies 131–238 (CCFAANVAAR…PADVLRRVYS (108 aa)). Residues 304 to 329 (AARGQVAAPEPEEEEEELEEEEEEEE) are disordered. A compositionally biased stretch (acidic residues) spans 313 to 329 (EPEEEEEELEEEEEEEE). Kelch repeat units follow at residues 320–366 (ELEE…TAGN), 367–425 (FLFV…AVGE), 426–473 (RLLA…VGDR), 475–526 (VVYI…VLRG), 528–571 (VFAF…VVEE), and 573–623 (ALLL…VLQL).

This chain is Kelch-like protein 34 (KLHL34), found in Homo sapiens (Human).